We begin with the raw amino-acid sequence, 408 residues long: Peptidase T (408 aa).

Histidine 78 provides a ligand contact to Zn(2+). Residue aspartate 80 is part of the active site. Position 140 (aspartate 140) interacts with Zn(2+). Glutamate 173 serves as the catalytic Proton acceptor. Zn(2+)-binding residues include glutamate 174, aspartate 196, and histidine 379.

The protein belongs to the peptidase M20B family. The cofactor is Zn(2+).

The protein resides in the cytoplasm. The catalysed reaction is Release of the N-terminal residue from a tripeptide.. In terms of biological role, cleaves the N-terminal amino acid of tripeptides. The chain is Peptidase T from Escherichia coli O9:H4 (strain HS).